A 300-amino-acid chain; its full sequence is Haloalkane dehalogenase (300 aa).

An AB hydrolase-1 domain is found at 32–155 (AIVFQHGNPT…PAVRGVFQGF (124 aa)). D109 serves as the catalytic Nucleophile. E133 (proton donor) is an active-site residue. H273 acts as the Proton acceptor in catalysis.

This sequence belongs to the haloalkane dehalogenase family. Type 2 subfamily. Monomer.

It carries out the reaction 1-haloalkane + H2O = a halide anion + a primary alcohol + H(+). In terms of biological role, catalyzes hydrolytic cleavage of carbon-halogen bonds in halogenated aliphatic compounds, leading to the formation of the corresponding primary alcohols, halide ions and protons. The polypeptide is Haloalkane dehalogenase (Mycobacterium bovis (strain BCG / Pasteur 1173P2)).